Consider the following 180-residue polypeptide: Inner membrane-spanning protein YciB (180 aa).

6 helical membrane passes run 4–24 (FLSE…GGGI), 25–45 (QHAT…CYVI), 49–69 (VSKL…ITLI), 76–96 (IKIK…MSGI), 118–138 (ITLS…NEVV), and 150–170 (FKVF…LPLL).

The protein belongs to the YciB family.

Its subcellular location is the cell inner membrane. In terms of biological role, plays a role in cell envelope biogenesis, maintenance of cell envelope integrity and membrane homeostasis. This chain is Inner membrane-spanning protein YciB, found in Rickettsia rickettsii (strain Iowa).